A 176-amino-acid chain; its full sequence is Probable fimbrial subunit LpfE (176 aa).

Positions 1-23 (MKFKRLLHSGIASLSLVACGVNA) are cleaved as a signal peptide.

Belongs to the fimbrial protein family.

It localises to the fimbrium. Its function is as follows. Part of the lpfABCC'DE fimbrial operon. LP fimbriae may participate in the interaction with eukaryotic cells by assisting in microcolony formation. This chain is Probable fimbrial subunit LpfE (lpfE), found in Escherichia coli O157:H7.